Reading from the N-terminus, the 196-residue chain is ATP-dependent Clp protease proteolytic subunit (196 aa).

The active-site Nucleophile is the Ser98. The active site involves His123.

It belongs to the peptidase S14 family. As to quaternary structure, fourteen ClpP subunits assemble into 2 heptameric rings which stack back to back to give a disk-like structure with a central cavity, resembling the structure of eukaryotic proteasomes.

Its subcellular location is the cytoplasm. The catalysed reaction is Hydrolysis of proteins to small peptides in the presence of ATP and magnesium. alpha-casein is the usual test substrate. In the absence of ATP, only oligopeptides shorter than five residues are hydrolyzed (such as succinyl-Leu-Tyr-|-NHMec, and Leu-Tyr-Leu-|-Tyr-Trp, in which cleavage of the -Tyr-|-Leu- and -Tyr-|-Trp bonds also occurs).. Functionally, cleaves peptides in various proteins in a process that requires ATP hydrolysis. Has a chymotrypsin-like activity. Plays a major role in the degradation of misfolded proteins. The protein is ATP-dependent Clp protease proteolytic subunit of Acidobacterium capsulatum (strain ATCC 51196 / DSM 11244 / BCRC 80197 / JCM 7670 / NBRC 15755 / NCIMB 13165 / 161).